The sequence spans 207 residues: Alpha/beta-tubulin-N-acetyltransferase 9 (207 aa).

Residues 35 to 180 form the N-acetyltransferase domain; the sequence is EELQRLTASE…QEVTLRLTVS (146 aa).

This sequence belongs to the acetyltransferase family. GNAT subfamily.

The catalysed reaction is N-terminal L-methionyl-[tubulin] + acetyl-CoA = N-terminal N(alpha)-acetyl-L-methionyl-[tubulin] + CoA + H(+). Functionally, N-acetyltransferase that mediates the acetylation of the N-terminal residues of alpha- and beta-tubulin. The sequence is that of Alpha/beta-tubulin-N-acetyltransferase 9 (NAT9) from Homo sapiens (Human).